Here is a 285-residue protein sequence, read N- to C-terminus: MSTPGPVPSSTSVATLPFSAQDKTQEQVSEELQSVGIYQDLERYEETIQQLSKSVDTFKPDLSLIDKVIECDKKLYETLEEFDEYYKIEEELSRLDKEQKNIDNKTREILETLNTCYNSLNELPMLEQVEFEQKVMLKQREKIHSKVVLDYAMKLAKFTRFPPTFDKSMIGPNNFIWPAEDSLRKGMLAMASLKKKELLLDALDEDNVNNDNNTSKIDEMRNTNEDSVDDRFNNKEQVQDATEDTERRGSFEFTANGKEDSETKSEENPDLELDLDLDLFNPDEF.

The span at Met1–Val13 shows a compositional bias: low complexity. The disordered stretch occupies residues Met1 to Gln25. Residues Glu31 to Thr115 adopt a coiled-coil conformation. Residues Asp206–Phe285 are disordered. Basic and acidic residues-rich tracts occupy residues Lys216–Ser250 and Gly257–Glu267. A compositionally biased stretch (acidic residues) spans Asn268–Phe285.

This sequence belongs to the Mediator complex subunit 4 family. As to quaternary structure, component of the Mediator complex.

Its subcellular location is the nucleus. Its function is as follows. Component of the Mediator complex, a coactivator involved in the regulated transcription of nearly all RNA polymerase II-dependent genes. Mediator functions as a bridge to convey information from gene-specific regulatory proteins to the basal RNA polymerase II transcription machinery. Mediator is recruited to promoters by direct interactions with regulatory proteins and serves as a scaffold for the assembly of a functional preinitiation complex with RNA polymerase II and the general transcription factors. The sequence is that of Mediator of RNA polymerase II transcription subunit 4 (MED4) from Kluyveromyces lactis (strain ATCC 8585 / CBS 2359 / DSM 70799 / NBRC 1267 / NRRL Y-1140 / WM37) (Yeast).